Here is a 393-residue protein sequence, read N- to C-terminus: NADH-quinone oxidoreductase subunit D (393 aa).

Belongs to the complex I 49 kDa subunit family. In terms of assembly, NDH-1 is composed of 14 different subunits. Subunits NuoB, C, D, E, F, and G constitute the peripheral sector of the complex.

The protein resides in the cell inner membrane. It catalyses the reaction a quinone + NADH + 5 H(+)(in) = a quinol + NAD(+) + 4 H(+)(out). Functionally, NDH-1 shuttles electrons from NADH, via FMN and iron-sulfur (Fe-S) centers, to quinones in the respiratory chain. The immediate electron acceptor for the enzyme in this species is believed to be ubiquinone. Couples the redox reaction to proton translocation (for every two electrons transferred, four hydrogen ions are translocated across the cytoplasmic membrane), and thus conserves the redox energy in a proton gradient. This chain is NADH-quinone oxidoreductase subunit D, found in Ehrlichia ruminantium (strain Welgevonden).